A 555-amino-acid polypeptide reads, in one-letter code: Urocanate hydratase (555 aa).

Residues 52–53, Gln130, 176–178, Glu196, Arg201, 242–243, 263–267, 273–274, and Tyr322 contribute to the NAD(+) site; these read GG, GMG, NA, QTSAH, and YL. Cys410 is a catalytic residue. Residue Gly492 coordinates NAD(+).

Belongs to the urocanase family. NAD(+) is required as a cofactor.

It localises to the cytoplasm. The enzyme catalyses 4-imidazolone-5-propanoate = trans-urocanate + H2O. Its pathway is amino-acid degradation; L-histidine degradation into L-glutamate; N-formimidoyl-L-glutamate from L-histidine: step 2/3. Functionally, catalyzes the conversion of urocanate to 4-imidazolone-5-propionate. In Shewanella sp. (strain W3-18-1), this protein is Urocanate hydratase.